Here is a 214-residue protein sequence, read N- to C-terminus: UPF0502 protein Acid345_3645 (214 aa).

Belongs to the UPF0502 family.

The polypeptide is UPF0502 protein Acid345_3645 (Koribacter versatilis (strain Ellin345)).